Here is a 162-residue protein sequence, read N- to C-terminus: Cyclic pyranopterin monophosphate synthase (162 aa).

Substrate is bound by residues 75 to 77 and 113 to 114; these read LCH and ME. Asp-128 is an active-site residue.

This sequence belongs to the MoaC family. As to quaternary structure, homohexamer; trimer of dimers.

It catalyses the reaction (8S)-3',8-cyclo-7,8-dihydroguanosine 5'-triphosphate = cyclic pyranopterin phosphate + diphosphate. Its pathway is cofactor biosynthesis; molybdopterin biosynthesis. Functionally, catalyzes the conversion of (8S)-3',8-cyclo-7,8-dihydroguanosine 5'-triphosphate to cyclic pyranopterin monophosphate (cPMP). The polypeptide is Cyclic pyranopterin monophosphate synthase (Burkholderia lata (strain ATCC 17760 / DSM 23089 / LMG 22485 / NCIMB 9086 / R18194 / 383)).